A 193-amino-acid chain; its full sequence is Chaperone protein TorD (193 aa).

It belongs to the TorD/DmsD family. TorD subfamily.

Its subcellular location is the cytoplasm. Involved in the biogenesis of TorA. Acts on TorA before the insertion of the molybdenum cofactor and, as a result, probably favors a conformation of the apoenzyme that is competent for acquiring the cofactor. In Actinobacillus succinogenes (strain ATCC 55618 / DSM 22257 / CCUG 43843 / 130Z), this protein is Chaperone protein TorD.